We begin with the raw amino-acid sequence, 400 residues long: MSSKLVLVLNCGSSSLKFAIINPENGEEFLSGLAECFNLPEARLKWKMDGQKHEAALGAGAAHSEALNFIVNTILAEKPELSQQIAAIGHRIVHGGEKFTKSVVITDEVIKGIEAAIPFAPLHNPAHLIGIEEARKAFPHLINKMVAVFDTAFHQTMPEEAYLYALPYSLYKDHSIRRYGAHGTSHFFVSREAAKMLNKPVDELNVITCHLGNGGSVSAIVNGKCVDTSMGLTPLEGLVMGTRSGDIDPAIVFHLHDTLGMSVEDINKLLTKESGLLGLTEVTSDCRYVEDNYETKADAKRAMDVYCHRLAKYIGSYCALMEGRLDAIIFTGGIGENAAMVRELSLKKLALLGFEVDHQRNLDARFGKSGTITTDNSRLAVVIPTNEELVIAQDASRLTA.

Asn-10 lines the Mg(2+) pocket. Position 17 (Lys-17) interacts with ATP. Arg-91 contributes to the substrate binding site. Residue Asp-150 is the Proton donor/acceptor of the active site. ATP contacts are provided by residues 210-214 (HLGNG), 285-287 (DCR), and 333-337 (GIGEN). Mg(2+) is bound at residue Glu-387.

Belongs to the acetokinase family. As to quaternary structure, homodimer. It depends on Mg(2+) as a cofactor. The cofactor is Mn(2+).

The protein localises to the cytoplasm. It catalyses the reaction acetate + ATP = acetyl phosphate + ADP. It participates in metabolic intermediate biosynthesis; acetyl-CoA biosynthesis; acetyl-CoA from acetate: step 1/2. Its function is as follows. Catalyzes the formation of acetyl phosphate from acetate and ATP. Can also catalyze the reverse reaction. This Proteus mirabilis (strain HI4320) protein is Acetate kinase.